We begin with the raw amino-acid sequence, 390 residues long: MRKLWNALRRPSARWSVLALVAIGIVIGIALIVLPHVGIKVTSTTEFCVSCHSMQPVYEEYKQSVHFQNASGVRAECHDCHIPPDIPGMVKRKLEASNDIYQTFIAHSIDTPEKFEAKRAELAEREWARMKENNSATCRSCHNYDAMDHAKQHPEAARQMKVAAKDNQSCIDCHKGIAHQLPDMSSGFRKQFDELRASANDSGDTLYSIDIKPIYAAKGDKEASGSLLPASEVKVLKRDGDWLQIEITGWTESAGRQRVLTQFPGKRIFVASIRGDVQQQVKTLEKTTVADTNTEWSKLQATAWMKKGDMVNDIKPIWAYADSLYNGTCNQCHGAPEIAHFDANGWIGTLNGMIGFTSLDKREERTLLKYLQMNASDTAGKAHGDKKEEK.

The Cytoplasmic portion of the chain corresponds to 1–16 (MRKLWNALRRPSARWS). Residues 17 to 37 (VLALVAIGIVIGIALIVLPHV) traverse the membrane as a helical segment. Residues 38 to 390 (GIKVTSTTEF…KAHGDKKEEK (353 aa)) lie on the Periplasmic side of the membrane. Residues cysteine 48, cysteine 51, histidine 52, cysteine 77, cysteine 80, histidine 81, cysteine 138, cysteine 141, histidine 142, cysteine 170, cysteine 173, histidine 174, cysteine 329, cysteine 332, and histidine 333 each coordinate heme.

Belongs to the TorC/TorY family. As to quaternary structure, the N-terminal domain interacts with TorA. The immature C-terminal domain can bind to the N-terminal detector region of TorS. Binds 5 heme groups per subunit.

The protein resides in the cell inner membrane. Its function is as follows. Part of the anaerobic respiratory chain of trimethylamine-N-oxide reductase TorA. Acts by transferring electrons from the membranous menaquinones to TorA. This transfer probably involves an electron transfer pathway from menaquinones to the N-terminal domain of TorC, then from the N-terminus to the C-terminus, and finally to TorA. TorC apocytochrome negatively autoregulates the torCAD operon probably by inhibiting the TorS kinase activity. This Escherichia coli (strain K12) protein is Cytochrome c-type protein TorC (torC).